The following is a 204-amino-acid chain: Glutathione S-transferase (204 aa).

A GST N-terminal domain is found at 3–80 (PSYKLTYCPV…YLGKQFGLSG (78 aa)). Glutathione-binding positions include Y9, W40, K44, 50-52 (GKT), and 64-65 (QS). A GST C-terminal domain is found at 82 to 204 (DDWENLEIDM…WVAKRPPTDL (123 aa)).

This sequence belongs to the GST superfamily. Sigma family.

It catalyses the reaction RX + glutathione = an S-substituted glutathione + a halide anion + H(+). The chain is Glutathione S-transferase from Blattella germanica (German cockroach).